A 945-amino-acid polypeptide reads, in one-letter code: Glutamyl aminopeptidase (945 aa).

Topologically, residues 1 to 18 (MNFAEEEPSKKYCIKGKH) are cytoplasmic. A helical; Signal-anchor for type II membrane protein membrane pass occupies residues 19–39 (VAIICGVVVAVGLIVGLSVGL). Residues 40 to 945 (TRSCEQDTTP…SIREWFASLP (906 aa)) lie on the Extracellular side of the membrane. Residues 43 to 77 (CEQDTTPAPSQPPPEASTALPPQDQNVCPDSEDES) form a disordered region. N-linked (GlcNAc...) asparagine glycosylation is found at Asn-116 and Asn-189. Position 215 (Glu-215) interacts with substrate. N-linked (GlcNAc...) asparagine glycosylation is present at Asn-316. 349–353 (GAMEN) is a binding site for substrate. His-385 is a Zn(2+) binding site. Glu-386 serves as the catalytic Proton acceptor. His-389 and Glu-408 together coordinate Zn(2+). Residues Asn-546, Asn-601, Asn-637, Asn-669, Asn-754, and Asn-792 are each glycosylated (N-linked (GlcNAc...) asparagine). Substrate is bound at residue Arg-878.

This sequence belongs to the peptidase M1 family. Homodimer; disulfide-linked. Zn(2+) is required as a cofactor. Early B-lineage cells and certain stromal cell of hemopoietic tissues. Also expressed by capillary endothelial cells, placenta, and epithelial cells of the intestine and proximal renal tubules.

It is found in the cell membrane. The catalysed reaction is Release of N-terminal glutamate (and to a lesser extent aspartate) from a peptide.. Substrate specificity is modulated by calcium which enhances the enzymatic activity for cleavage of acidic residues while reducing its activity with basic residues. Inhibited by aminopeptidase inhibitors amastatin and bestatin. Its function is as follows. Regulates central hypertension through its calcium-modulated preference to cleave N-terminal acidic residues from peptides such as angiotensin II. This chain is Glutamyl aminopeptidase (Enpep), found in Mus musculus (Mouse).